We begin with the raw amino-acid sequence, 84 residues long: Succinate dehydrogenase membrane anchor subunit (84 aa).

Residues 1-3 (MIT) lie on the Mitochondrial matrix side of the membrane. The chain crosses the membrane as a helical span at residues 4–24 (FQWLIVRVVALFISLTILIDI). Topologically, residues 25–31 (EMFVVML) are mitochondrial intermembrane. A helical transmembrane segment spans residues 32 to 52 (SFLIIHISIGLKAIIHDYIHF). Histidine 37 is a heme binding site. An a ubiquinone-binding site is contributed by tyrosine 49. Over 53–58 (QKIKLM) the chain is Mitochondrial matrix. Residues 59–81 (LLILLRVSAIEISRSFRTFYIII) traverse the membrane as a helical segment. The Mitochondrial intermembrane portion of the chain corresponds to 82 to 84 (KNT).

In terms of assembly, part of an enzyme complex containing four subunits: a flavoprotein, an iron-sulfur protein, plus two membrane-anchoring proteins. Heme serves as cofactor.

It localises to the mitochondrion inner membrane. It functions in the pathway carbohydrate metabolism; tricarboxylic acid cycle. Functionally, membrane-anchoring subunit of succinate dehydrogenase (SDH). The polypeptide is Succinate dehydrogenase membrane anchor subunit (SDH4) (Chondrus crispus (Carrageen Irish moss)).